The following is a 1021-amino-acid chain: Ankyrin repeat- and BTB/POZ domain-containing protein 3-A (1021 aa).

Residues 160–180 (MVLSWTISVNCITAALSALSL) traverse the membrane as a helical segment. ANK repeat units lie at residues 515–544 (QGMTPLMYSCVRGDEAMVQMLLDAGADINS), 561–590 (RQGTPLTFAVLHGHVPVVQLLLDARANVEG), 599–628 (YTETPLQLASAAGNFELVSLLLERGADPLI), and 642–671 (GEMNSYSLAAAHGHRNVFRKLLSQVEKDKG). The BTB domain maps to 836-902 (SDVTFLVEGK…LYCGGTESLH (67 aa)).

Its subcellular location is the membrane. The chain is Ankyrin repeat- and BTB/POZ domain-containing protein 3-A (abtb3a) from Danio rerio (Zebrafish).